The primary structure comprises 548 residues: MEEDLFQLRQLPVVKFRRTGESARSEDDTASGEHEVQIEGVRAGLEAVELDDGAAVPKEFANPTDDTFMVEDAVEAIGFGKFQWKLSVLTGLAWMADAMEMMILSILAPQLHCEWRLPSWQVALLTSVVFVGMMSSSTLWGNISDQYGRKTGLKISVLWTLYYGILSAFAPVYSWILVLRGLVGFGIGGVPQSVTLYAEFLPMKARAKCILLIEVFWAIGTVFEVVLAVFVMPSLGWRWLLILSAVPLLLFAVLCFWLPESARYDVLSGNQEKAIATLKRIATENGAPMPLGKLIISRQEDRGKMRDLFTPHFRWTTLLLWFIWFSNAFSYYGLVLLTTELFQAGDVCSISSRKKAVEAKCSLACEYLSEEDYMDLLWTTLSEFPGVLVTLWIIDRLGRKKTMALCFVVFSFCSLLLFICVGRNMLTLLLFIARAFISGGFQAAYVYTPEVYPTATRALGLGTCSGMARVGALITPFIAQVMLESSVYLTLAVYSGCCLLAALASCFLPIETKGRGLQESSHREWGQEMVGRGAHGTGVARSNSGSQE.

Residues 1–87 (MEEDLFQLRQ…GFGKFQWKLS (87 aa)) lie on the Cytoplasmic side of the membrane. Residues S25 and S31 each carry the phosphoserine modification. Residues 88-108 (VLTGLAWMADAMEMMILSILA) form a helical membrane-spanning segment. The Vesicular portion of the chain corresponds to 109–122 (PQLHCEWRLPSWQV). The helical transmembrane segment at 123-143 (ALLTSVVFVGMMSSSTLWGNI) threads the bilayer. Over 144-156 (SDQYGRKTGLKIS) the chain is Cytoplasmic. Residues 157 to 177 (VLWTLYYGILSAFAPVYSWIL) traverse the membrane as a helical segment. At 178–180 (VLR) the chain is on the vesicular side. Residues 181–201 (GLVGFGIGGVPQSVTLYAEFL) traverse the membrane as a helical segment. The Cytoplasmic portion of the chain corresponds to 202–209 (PMKARAKC). A helical transmembrane segment spans residues 210 to 230 (ILLIEVFWAIGTVFEVVLAVF). Over 231–238 (VMPSLGWR) the chain is Vesicular. A helical membrane pass occupies residues 239-259 (WLLILSAVPLLLFAVLCFWLP). The Cytoplasmic segment spans residues 260 to 316 (ESARYDVLSGNQEKAIATLKRIATENGAPMPLGKLIISRQEDRGKMRDLFTPHFRWT). Residues 317 to 337 (TLLLWFIWFSNAFSYYGLVLL) traverse the membrane as a helical segment. Residues 338–373 (TTELFQAGDVCSISSRKKAVEAKCSLACEYLSEEDY) lie on the Vesicular side of the membrane. Residues 374–394 (MDLLWTTLSEFPGVLVTLWII) traverse the membrane as a helical segment. Residues 395 to 401 (DRLGRKK) are Cytoplasmic-facing. The chain crosses the membrane as a helical span at residues 402 to 422 (TMALCFVVFSFCSLLLFICVG). The Vesicular segment spans residues 423 to 425 (RNM). The helical transmembrane segment at 426-446 (LTLLLFIARAFISGGFQAAYV) threads the bilayer. Topologically, residues 447 to 457 (YTPEVYPTATR) are cytoplasmic. A helical membrane pass occupies residues 458–478 (ALGLGTCSGMARVGALITPFI). Residues 479-489 (AQVMLESSVYL) lie on the Vesicular side of the membrane. The helical transmembrane segment at 490 to 510 (TLAVYSGCCLLAALASCFLPI) threads the bilayer. The Cytoplasmic portion of the chain corresponds to 511–548 (ETKGRGLQESSHREWGQEMVGRGAHGTGVARSNSGSQE). Positions 528–548 (EMVGRGAHGTGVARSNSGSQE) are disordered. A Phosphoserine modification is found at S542.

This sequence belongs to the major facilitator superfamily. As to expression, detected in brain and adrenal medulla.

It localises to the cytoplasmic vesicle. The protein resides in the secretory vesicle. Its subcellular location is the synaptic vesicle membrane. The chain is Synaptic vesicle 2-related protein (SVOP) from Bos taurus (Bovine).